The following is an 84-amino-acid chain: RNA-binding protein Hfq (84 aa).

Residues 10-69 (EPFLNTLRREHVPVSIYLVNGIKLQGQIESFDQYVVLLRNTVTQMVFKHAISTIVPGRAV) form the Sm domain.

The protein belongs to the Hfq family. Homohexamer.

Functionally, RNA chaperone that binds small regulatory RNA (sRNAs) and mRNAs to facilitate mRNA translational regulation in response to envelope stress, environmental stress and changes in metabolite concentrations. Also binds with high specificity to tRNAs. The polypeptide is RNA-binding protein Hfq (Verminephrobacter eiseniae (strain EF01-2)).